The primary structure comprises 538 residues: Anti-bacteriophage protein A (538 aa).

In terms of assembly, interacts with AbpB.

Functionally, part of an antiviral system composed of AbpA and AbpB; when both are expressed from a plasmid they confer resistance to phages T2, T4, T7 and lambda but not RB32 or RB69. Resistance is temperature dependent, it can be seen at 30 degrees Celsius but not at 37 or 42 degrees Celsius. The system impairs phage but not bacterial DNA synthesis (shown for T4, T7 and lambda). Partially suppressed by mutations in T4 gene 41, a replicative helicase. The chain is Anti-bacteriophage protein A from Escherichia coli (strain K12).